A 4144-amino-acid chain; its full sequence is DNA-dependent protein kinase catalytic subunit (4144 aa).

Lys-127 is subject to N6-acetyllysine. An HEAT 1 repeat occupies 298–333 (DNYVSLFEVLSKWCSHTNVEMKKAAHSALESFLKQV). Residues Ser-521, Ser-851, and Ser-903 each carry the phosphoserine modification. The HEAT 2 repeat unit spans residues 1014 to 1050 (QDTVALLETILDGIVDPVDSTLRDFCGRCIREFLKWS). A Phosphoserine modification is found at Ser-1075. Lys-1219 bears the N6-acetyllysine mark. The segment at 1516–1551 (LDPSCKRLASGLLELAFAFGGLCEHLVDLLLDTAVL) is interaction with C1D. The tract at residues 1516 to 1551 (LDPSCKRLASGLLELAFAFGGLCEHLVDLLLDTAVL) is leucine-zipper. A TPR 1 repeat occupies 1736–1769 (PMKSEEFPVGTLRYSNYVDCMKKFLDALELSQSP). Residue Lys-1983 is modified to N6-acetyllysine. Ser-2069 carries the post-translational modification Phosphoserine; by autocatalysis. At Lys-2271 the chain carries N6-acetyllysine. The interval 2448 to 3228 (LDIIYKMMAK…DHSLSMDEER (781 aa)) is KIP-binding. Phosphothreonine is present on Thr-2547. Thr-2621 carries the phosphothreonine; by autocatalysis modification. Ser-2624 carries the post-translational modification Phosphoserine; by autocatalysis. A phosphothreonine; by autocatalysis mark is found at Thr-2650 and Thr-2659. The disordered stretch occupies residues 2697–2729 (AQKRNEKSQRAPLKSVGPDFGEKKLGLPGDKVD). Over residues 2716–2729 (FGEKKLGLPGDKVD) the composition is skewed to basic and acidic residues. The may split the end of the DNA molecule, with the two strands separating around the region stretch occupies residues 2753–2781 (EKLSLIYARKGIAEQKREKEIKSELKMKH). Ser-2805 bears the Phosphoserine mark. TPR repeat units follow at residues 2903 to 2935 (PVGVRLLEEALLHLGPQEPPAKQFKGRMRVSPD), 2936 to 2964 (VVRWMELAKLYRSIGEYDILRGIFSSEIG), and 2965 to 2998 (TKQITQSAIFAEARSDYSEAAKQYNEALNKEEWV). The region spanning 2922-3555 (PAKQFKGRMR…VYPFIISSES (634 aa)) is the FAT domain. Ser-3221 carries the phosphoserine modification. An N6-acetyllysine mark is found at Lys-3257, Lys-3276, Lys-3654, and Lys-3658. A TPR 5 repeat occupies 3711–3748 (LRNELEIPGQYDGKGKPLPEYHARIAGFDERIKVMASI). The 332-residue stretch at 3738–4069 (FDERIKVMAS…IHYAKRKLAG (332 aa)) folds into the PI3K/PI4K catalytic domain. Residues 3744–3750 (VMASIRK) are G-loop. 2 positions are modified to phosphoserine: Ser-3747 and Ser-3837. The catalytic loop stretch occupies residues 3935–3943 (GIGDRHLNN). An activation loop region spans residues 3955-3980 (GIDFGHAFGSATQFLPVPELMPFRLT). At Ser-4042 the chain carries Phosphoserine. The FATC domain occupies 4112–4144 (NGLSEEAQVKCLIDQATDPNILGRTWIGWEPWM).

It belongs to the PI3/PI4-kinase family. In terms of assembly, DNA-PK is a heterotrimer of PRKDC and the Ku dimer (composed of XRCC6/Ku70 and XRCC5/Ku86). Formation of this complex may be promoted by interaction with ILF3. Component of the core long-range non-homologous end joining (NHEJ) complex (also named DNA-PK complex) composed of PRKDC, LIG4, XRCC4, XRCC6/Ku70, XRCC5/Ku86 and NHEJ1/XLF. Additional component of the NHEJ complex includes PAXX. Following autophosphorylation, PRKDC dissociates from DNA. Interacts with DNA-PKcs-interacting protein (KIP) with the region upstream the kinase domain. PRKDC alone also interacts with and phosphorylates DCLRE1C, thereby activating the latent endonuclease activity of this protein. Interacts with C1D. Interacts with TTI1 and TELO2. Interacts with CIB1. Interacts with SETX. Interacts with NR4A3; the DNA-dependent protein kinase complex DNA-PK phosphorylates and activates NR4A3 and prevents NR4A3 ubiquitination and degradation. Interacts with BRAT1. Part of the HDP-RNP complex composed of at least HEXIM1, PRKDC, XRCC5, XRCC6, paraspeckle proteins (SFPQ, NONO, PSPC1, RBM14, and MATR3) and NEAT1 RNA. Interacts with KAT5. In terms of processing, autophosphorylated at two clusters, the T2609 cluster and the S2056 cluster. Autophosphorylated on Ser-2069, Thr-2621, Thr-2650 and Thr-2659. Ser-2069 and Thr-2621 are DNA damage-inducible phosphorylation sites (inducible with ionizing radiation, IR) dephosphorylated by PPP5C. Autophosphorylation induces a conformational change that leads to remodeling of the DNA-PK complex, requisite for efficient end processing and DNA repair. Autophosphorylation in trans within DNA-PK complexes loaded on DNA ends leads to the dissociation of PRKDC from DNA and the transition into the short-range NHEJ complex. Autophosphorylation of the T2609 cluster is required for hematopoietic development and protein synthesis in erythrocytes precursors. Post-translationally, S-nitrosylated by GAPDH. Polyubiquitinated by RNF144A, leading to proteasomal degradation.

The protein localises to the nucleus. It is found in the nucleolus. The protein resides in the cytoplasm. Its subcellular location is the cytosol. The enzyme catalyses L-seryl-[protein] + ATP = O-phospho-L-seryl-[protein] + ADP + H(+). It catalyses the reaction L-threonyl-[protein] + ATP = O-phospho-L-threonyl-[protein] + ADP + H(+). Its activity is regulated as follows. Activity seems to be attenuated by autophosphorylation. Binding to the SL1 region of U3 small nucleolar RNA promotes auto-phosphorylation activity. Inhibited by wortmannin. Its function is as follows. Serine/threonine-protein kinase that acts as a molecular sensor for DNA damage. Involved in DNA non-homologous end joining (NHEJ) required for double-strand break (DSB) repair and V(D)J recombination. Must be bound to DNA to express its catalytic properties. Promotes processing of hairpin DNA structures in V(D)J recombination by activation of the hairpin endonuclease artemis (DCLRE1C). Recruited by XRCC5 and XRCC6 to DNA ends and is required to (1) protect and align broken ends of DNA, thereby preventing their degradation, (2) and sequester the DSB for repair by NHEJ. Acts as a scaffold protein to aid the localization of DNA repair proteins to the site of damage. The assembly of the DNA-PK complex at DNA ends is also required for the NHEJ ligation step. Found at the ends of chromosomes, suggesting a further role in the maintenance of telomeric stability and the prevention of chromosomal end fusion. Also involved in modulation of transcription. As part of the DNA-PK complex, involved in the early steps of ribosome assembly by promoting the processing of precursor rRNA into mature 18S rRNA in the small-subunit processome. Binding to U3 small nucleolar RNA, recruits PRKDC and XRCC5/Ku86 to the small-subunit processome. Recognizes the substrate consensus sequence [ST]-Q. Phosphorylates 'Ser-139' of histone variant H2AX, thereby regulating DNA damage response mechanism. Phosphorylates ASF1A, DCLRE1C, c-Abl/ABL1, histone H1, HSPCA, c-jun/JUN, p53/TP53, PARP1, POU2F1, DHX9, FH, SRF, NHEJ1/XLF, XRCC1, XRCC4, XRCC5, XRCC6, WRN, MYC and RFA2. Can phosphorylate C1D not only in the presence of linear DNA but also in the presence of supercoiled DNA. Ability to phosphorylate p53/TP53 in the presence of supercoiled DNA is dependent on C1D. Acts as a regulator of the phosphatidylinositol 3-kinase/protein kinase B signal transduction by mediating phosphorylation of 'Ser-473' of protein kinase B (PKB/AKT1, PKB/AKT2, PKB/AKT3), promoting their activation. Contributes to the determination of the circadian period length by antagonizing phosphorylation of CRY1 'Ser-588' and increasing CRY1 protein stability, most likely through an indirect mechanism. Plays a role in the regulation of DNA virus-mediated innate immune response by assembling into the HDP-RNP complex, a complex that serves as a platform for IRF3 phosphorylation and subsequent innate immune response activation through the cGAS-STING pathway. Also regulates the cGAS-STING pathway by catalyzing phosphorylation of CGAS, thereby impairing CGAS oligomerization and activation. Also regulates the cGAS-STING pathway by mediating phosphorylation of PARP1. This is DNA-dependent protein kinase catalytic subunit (PRKDC) from Canis lupus familiaris (Dog).